A 948-amino-acid chain; its full sequence is Sensor histidine kinase RcsC (948 aa).

Residues 1-20 (MKYLASFRTTLKVSRYLFRA) are Cytoplasmic-facing. The helical transmembrane segment at 21-41 (LALLIWLLIAFVSVFYIVNAL) threads the bilayer. The Periplasmic portion of the chain corresponds to 42-313 (HQRESEIRQE…PVDLVLERIR (272 aa)). Residues 314 to 334 (ILILNAILLNVLVGAGLFTLA) form a helical membrane-spanning segment. Topologically, residues 335 to 948 (RMYERRIFIP…YAERVRKTRA (614 aa)) are cytoplasmic. The PAS domain occupies 357-425 (QFNRKIVASA…VLTSNNTNLQ (69 aa)). One can recognise a Histidine kinase domain in the interval 476–692 (TVSHELRTPL…QFTLRIPLYG (217 aa)). His-479 bears the Phosphohistidine; by autocatalysis mark. An ABL domain is found at 705–805 (AGTCCWLAVR…ARIYSIELDS (101 aa)). Residues 826 to 940 (MILVVDDHPI…ALKQTLAVYA (115 aa)) enclose the Response regulatory domain. Asp-875 carries the 4-aspartylphosphate modification.

The protein belongs to the RcsC family. In terms of assembly, interacts with RcsD. Post-translationally, autophosphorylated. Activation probably requires a transfer of a phosphate group from a His in the transmitter domain to an Asp in the receiver domain.

The protein localises to the cell inner membrane. It carries out the reaction ATP + protein L-histidine = ADP + protein N-phospho-L-histidine.. Its function is as follows. Component of the Rcs signaling system, which controls transcription of numerous genes. RcsC functions as a membrane-associated protein kinase that phosphorylates RcsD in response to environmental signals. The phosphoryl group is then transferred to the response regulator RcsB. The chain is Sensor histidine kinase RcsC from Salmonella typhi.